A 155-amino-acid chain; its full sequence is Probable tellurium resistance transcriptional regulator TerW (155 aa).

In terms of biological role, involved in tellurite resistance. TerW binds specifically to the potential promoter region of the terZABCDE operon and probably regulates expression of the genes. The protein is Probable tellurium resistance transcriptional regulator TerW of Escherichia coli.